Here is a 481-residue protein sequence, read N- to C-terminus: N-succinylglutamate 5-semialdehyde dehydrogenase (481 aa).

Position 206–211 (Gly206–Gly211) interacts with NAD(+). Residues Glu229 and Cys263 contribute to the active site.

The protein belongs to the aldehyde dehydrogenase family. AstD subfamily.

It catalyses the reaction N-succinyl-L-glutamate 5-semialdehyde + NAD(+) + H2O = N-succinyl-L-glutamate + NADH + 2 H(+). It functions in the pathway amino-acid degradation; L-arginine degradation via AST pathway; L-glutamate and succinate from L-arginine: step 4/5. Functionally, catalyzes the NAD-dependent reduction of succinylglutamate semialdehyde into succinylglutamate. The sequence is that of N-succinylglutamate 5-semialdehyde dehydrogenase from Sphingopyxis alaskensis (strain DSM 13593 / LMG 18877 / RB2256) (Sphingomonas alaskensis).